Consider the following 271-residue polypeptide: Short-chain dehydrogenase ptmH (271 aa).

Residues I8, T34, K40, D56, N84, Y148, K152, V181, and T183 each contribute to the NADP(+) site. Y148 serves as the catalytic Proton acceptor. K152 acts as the Lowers pKa of active site Tyr in catalysis.

The protein belongs to the short-chain dehydrogenases/reductases (SDR) family.

Its pathway is secondary metabolite biosynthesis. Its function is as follows. Short-chain dehydrogenase; part of the gene cluster that mediates the biosynthesis of the indole diterpenes penitrems. The geranylgeranyl diphosphate (GGPP) synthase ptmG catalyzes the first step in penitrem biosynthesis via conversion of farnesyl pyrophosphate and isopentyl pyrophosphate into geranylgeranyl pyrophosphate (GGPP). Condensation of indole-3-glycerol phosphate with GGPP by the prenyl transferase ptmC then forms 3-geranylgeranylindole (3-GGI). Epoxidation by the FAD-dependent monooxygenase ptmM leads to a epoxidized-GGI that is substrate of the terpene cyclase ptmB for cyclization to yield paspaline. Paspaline is subsequently converted to 13-desoxypaxilline by the cytochrome P450 monooxygenase ptmP, the latter being then converted to paxilline by the cytochrome P450 monooxygenase ptmQ. Paxilline is converted to beta-paxitriol via C-10 ketoreduction by the short-chain dehydrogenase ptmH which can be monoprenylated at the C-20 by the indole diterpene prenyltransferase ptmD. A two-step elimination (acetylation and elimination) process performed by the O-acetyltransferase ptmV and ptmI leads to the production of the prenylated form of penijanthine. The FAD-linked oxidoreductase ptmO then converts the prenylated form of penijanthine into PC-M5 which is in turn transformed into PC-M4 by the aromatic dimethylallyltransferase ptmE. Five sequential oxidative transformations performed by the cytochrome P450 monooxygenases ptmK, ptmU, ptmL, ptmN and ptmJ yield the various penitrem compounds. PtmK, ptmU and ptmM are involved in the formation of the key bicyclic ring of penitrem C via the formation of the intermediates secopenitrem D and penitrem D. PtmL catalyzes the epoxidation of penitrem D and C to yield penitrem B and F, respectively. PtmJ catalyzes the last benzylic hydroxylation to convert penitrem B to prenitrem E and penitrem F to penitrem A. The protein is Short-chain dehydrogenase ptmH of Penicillium ochrochloron.